Here is a 502-residue protein sequence, read N- to C-terminus: ATP synthase subunit alpha, chloroplastic (502 aa).

Residue 170-177 (GDRQTGKT) coordinates ATP.

Belongs to the ATPase alpha/beta chains family. In terms of assembly, F-type ATPases have 2 components, CF(1) - the catalytic core - and CF(0) - the membrane proton channel. CF(1) has five subunits: alpha(3), beta(3), gamma(1), delta(1), epsilon(1). CF(0) has four main subunits: a, b, b' and c.

The protein resides in the plastid. The protein localises to the chloroplast thylakoid membrane. The catalysed reaction is ATP + H2O + 4 H(+)(in) = ADP + phosphate + 5 H(+)(out). Produces ATP from ADP in the presence of a proton gradient across the membrane. The alpha chain is a regulatory subunit. In Rhodomonas salina (Cryptomonas salina), this protein is ATP synthase subunit alpha, chloroplastic.